The primary structure comprises 259 residues: Dihydroorotate dehydrogenase B (NAD(+)), electron transfer subunit (259 aa).

The 101-residue stretch at 2–102 folds into the FAD-binding FR-type domain; it reads MQKQNMIVVN…LGPLGHGFPL (101 aa). Residues 53–56, 70–72, and 77–78 each bind FAD; these read RPIS, LYR, and GT. [2Fe-2S] cluster-binding residues include Cys221, Cys226, Cys229, and Cys246.

The protein belongs to the PyrK family. As to quaternary structure, heterotetramer of 2 PyrK and 2 PyrD type B subunits. [2Fe-2S] cluster serves as cofactor. FAD is required as a cofactor.

It functions in the pathway pyrimidine metabolism; UMP biosynthesis via de novo pathway; orotate from (S)-dihydroorotate (NAD(+) route): step 1/1. Its function is as follows. Responsible for channeling the electrons from the oxidation of dihydroorotate from the FMN redox center in the PyrD type B subunit to the ultimate electron acceptor NAD(+). This chain is Dihydroorotate dehydrogenase B (NAD(+)), electron transfer subunit, found in Bacillus cereus (strain B4264).